The sequence spans 99 residues: Large ribosomal subunit protein eL21 (99 aa).

This sequence belongs to the eukaryotic ribosomal protein eL21 family.

This is Large ribosomal subunit protein eL21 from Pyrobaculum calidifontis (strain DSM 21063 / JCM 11548 / VA1).